We begin with the raw amino-acid sequence, 153 residues long: Histone H2B.3 (153 aa).

The segment covering 1–28 (MAPKADKKPAAKKPAEEEPATEKAEKAP) has biased composition (basic and acidic residues). Residues 1–60 (MAPKADKKPAAKKPAEEEPATEKAEKAPAGKKPKAEKRLPAGKSAGKEGGEGKKGKKKAK) form a disordered region. K7 and K37 each carry N6-acetyllysine. Residue K149 forms a Glycyl lysine isopeptide (Lys-Gly) (interchain with G-Cter in ubiquitin) linkage.

This sequence belongs to the histone H2B family. The nucleosome is a histone octamer containing two molecules each of H2A, H2B, H3 and H4 assembled in one H3-H4 heterotetramer and two H2A-H2B heterodimers. The octamer wraps approximately 147 bp of DNA. Post-translationally, can be acetylated to form H2BK6ac and H2BK33ac. In terms of processing, monoubiquitinated to form H2BK143ub1; may give a specific tag for epigenetic transcriptional activation.

It localises to the nucleus. It is found in the chromosome. Its function is as follows. Core component of nucleosome. Nucleosomes wrap and compact DNA into chromatin, limiting DNA accessibility to the cellular machineries which require DNA as a template. Histones thereby play a central role in transcription regulation, DNA repair, DNA replication and chromosomal stability. DNA accessibility is regulated via a complex set of post-translational modifications of histones, also called histone code, and nucleosome remodeling. This Zea mays (Maize) protein is Histone H2B.3.